The following is a 363-amino-acid chain: Protein RecA (363 aa).

77 to 84 lines the ATP pocket; that stretch reads GPESSGKT.

The protein belongs to the RecA family.

Its subcellular location is the cytoplasm. In terms of biological role, can catalyze the hydrolysis of ATP in the presence of single-stranded DNA, the ATP-dependent uptake of single-stranded DNA by duplex DNA, and the ATP-dependent hybridization of homologous single-stranded DNAs. It interacts with LexA causing its activation and leading to its autocatalytic cleavage. This is Protein RecA from Agrobacterium fabrum (strain C58 / ATCC 33970) (Agrobacterium tumefaciens (strain C58)).